The chain runs to 893 residues: Flippase kinase 1 (893 aa).

Over residues 1 to 23 (MAGHHHEHEQERDHEQEHEHDSL) the composition is skewed to basic and acidic residues. 3 disordered regions span residues 1 to 124 (MAGH…SSKL), 129 to 148 (PMTSVANASPASPPLSPTIP), and 163 to 243 (QHEH…ERAG). Positions 24–42 (QRPTTGSERTRSISFSKLL) are enriched in polar residues. The segment covering 49–62 (NASSSNNMSVSSVN) has biased composition (low complexity). Residues 76-87 (NNSGSEGQSSRF) show a composition bias toward polar residues. Low complexity predominate over residues 96-122 (SGNSSKNASAHNSSQSSLEGDSASSSS). Phosphoserine is present on residues serine 140, serine 144, serine 171, serine 175, and serine 185. Residues 206–216 (SQNSNNSSSTS) show a composition bias toward low complexity. Polar residues predominate over residues 228 to 237 (GSQGFSSNNP). The residue at position 300 (serine 300) is a Phosphoserine. Residues 334–355 (DTLNGSPSRGSSKSPTITQTFP) show a composition bias toward polar residues. The tract at residues 334-480 (DTLNGSPSRG…PRRSRRLRTK (147 aa)) is disordered. A compositionally biased stretch (basic and acidic residues) spans 370-380 (NNDKHDEKEEQ). Positions 381–399 (QTTTDNKTRNLSPTKQNGK) are enriched in polar residues. A Phosphoserine modification is found at serine 414. A compositionally biased stretch (low complexity) spans 422–439 (ASATSPTSSSARKTSGSS). The residue at position 462 (serine 462) is a Phosphoserine. Positions 496 to 777 (FEKIRLLGQG…AADVKKHPFF (282 aa)) constitute a Protein kinase domain. Residues 502–510 (LGQGDVGKV) and lysine 525 each bind ATP. Aspartate 621 acts as the Proton acceptor in catalysis. In terms of domain architecture, AGC-kinase C-terminal spans 778–861 (KKVQWSLLRN…MSLMEQDNNS (84 aa)). The disordered stretch occupies residues 874–893 (AYTPNSNRSRSNSHRTFFKR). A compositionally biased stretch (basic residues) spans 884 to 893 (SNSHRTFFKR).

Belongs to the protein kinase superfamily. Ser/Thr protein kinase family. KIN82 subfamily. In terms of processing, the N-terminal non-catalytic domain is phosphorylated by YPK1.

The protein resides in the cytoplasm. It is found in the cell membrane. The catalysed reaction is L-seryl-[protein] + ATP = O-phospho-L-seryl-[protein] + ADP + H(+). It carries out the reaction L-threonyl-[protein] + ATP = O-phospho-L-threonyl-[protein] + ADP + H(+). Its activity is regulated as follows. Down-regulated by YKP1 phosphorylation. This effect is counteracted in the presence of mannosyl-inositolphosphorylceramide (MIPC). Its function is as follows. Flippase activator that phosphorylates DNF1 and DNF2 and which is involved in the generation of phospholipid asymmetry in membranes by the inward translocation of phospholipids and in the retrieval pathway from early endosomes to the trans-Golgi network (TGN). Also phosphorylates the N-terminal half of YPK1. Involved in pheromone-response. This is Flippase kinase 1 (FPK1) from Saccharomyces cerevisiae (strain ATCC 204508 / S288c) (Baker's yeast).